A 144-amino-acid chain; its full sequence is VYNQTTAVLGCVISGFYPDSVQVSWKKDRVDQSGVVLHSKQRNDSTFETVSYLTVPVVEWTTGDVYTCEVSHAGSRFNDRISMRYQKGGTINLPVPGGNTPCTCPPCSCSGCMPKLVYQTDLNVTLENGGQLQYNCHQQACKIK.

Residues 1–82 enclose the Ig-like domain; that stretch reads VYNQTTAVLG…AGSRFNDRIS (82 aa). N-linked (GlcNAc...) asparagine glycosylation is found at N3, N43, and N123. The cysteines at positions 11 and 68 are disulfide-linked. The segment at 87 to 144 is secretory tail; that stretch reads KGGTINLPVPGGNTPCTCPPCSCSGCMPKLVYQTDLNVTLENGGQLQYNCHQQACKIK.

As to expression, expressed mainly in lymphoid tissues including spleen, epigonal organ and circulating lymphocytes.

It is found in the secreted. This is IgW chain C region, secreted form 1/3 from Heterodontus francisci (Horn shark).